The primary structure comprises 512 residues: Glutathione-binding protein GsiB (512 aa).

A signal peptide spans 1-26; sequence MARAVHRSGLVALGIVTALMASCAFA.

The protein belongs to the bacterial solute-binding protein 5 family. The complex is composed of two ATP-binding proteins (GsiA), two transmembrane proteins (GsiC and GsiD) and a solute-binding protein (GsiB).

The protein resides in the periplasm. Its function is as follows. Part of the ABC transporter complex GsiABCD involved in glutathione import. Binds glutathione. The chain is Glutathione-binding protein GsiB from Shigella dysenteriae serotype 1 (strain Sd197).